Reading from the N-terminus, the 414-residue chain is 2-epi-5-epi-valiolone synthase (414 aa).

NAD(+) is bound by residues aspartate 70, 101-104 (ESAK), 134-138 (GVLTD), 158-159 (TT), lysine 171, lysine 180, and 198-201 (FLAT). Residue lysine 171 is part of the active site. Zn(2+) is bound by residues glutamate 213, histidine 284, and histidine 300.

It belongs to the sugar phosphate cyclases superfamily. EEVS family. NAD(+) serves as cofactor. Zn(2+) is required as a cofactor.

The enzyme catalyses D-sedoheptulose 7-phosphate = 2-epi-5-epi-valiolone + phosphate. The protein operates within antibiotic biosynthesis. In terms of biological role, catalyzes the cyclization of D-sedoheptulose 7-phosphate to 2-epi-5-epi-valiolone. Involved in validamycin biosynthesis. The protein is 2-epi-5-epi-valiolone synthase of Streptomyces hygroscopicus subsp. jinggangensis (strain 5008).